The chain runs to 176 residues: ATP-dependent protease subunit HslV (176 aa).

Threonine 2 is a catalytic residue. Na(+)-binding residues include glycine 157, cysteine 160, and threonine 163.

This sequence belongs to the peptidase T1B family. HslV subfamily. As to quaternary structure, a double ring-shaped homohexamer of HslV is capped on each side by a ring-shaped HslU homohexamer. The assembly of the HslU/HslV complex is dependent on binding of ATP.

The protein resides in the cytoplasm. The enzyme catalyses ATP-dependent cleavage of peptide bonds with broad specificity.. Allosterically activated by HslU binding. Its function is as follows. Protease subunit of a proteasome-like degradation complex believed to be a general protein degrading machinery. This Pseudomonas syringae pv. tomato (strain ATCC BAA-871 / DC3000) protein is ATP-dependent protease subunit HslV.